Here is a 156-residue protein sequence, read N- to C-terminus: Small ribosomal subunit protein uS7 (156 aa).

The protein belongs to the universal ribosomal protein uS7 family. In terms of assembly, part of the 30S ribosomal subunit. Contacts proteins S9 and S11.

Its function is as follows. One of the primary rRNA binding proteins, it binds directly to 16S rRNA where it nucleates assembly of the head domain of the 30S subunit. Is located at the subunit interface close to the decoding center, probably blocks exit of the E-site tRNA. In Azorhizobium caulinodans (strain ATCC 43989 / DSM 5975 / JCM 20966 / LMG 6465 / NBRC 14845 / NCIMB 13405 / ORS 571), this protein is Small ribosomal subunit protein uS7.